The sequence spans 406 residues: Putative nickel insertion protein (406 aa).

It belongs to the LarC family.

The polypeptide is Putative nickel insertion protein (Thermomicrobium roseum (strain ATCC 27502 / DSM 5159 / P-2)).